A 352-amino-acid polypeptide reads, in one-letter code: tRNA pseudouridine synthase D (352 aa).

Asp78 acts as the Nucleophile in catalysis. Residues 153 to 299 (GVPNYYGEQR…LDQDRRPLLL (147 aa)) form the TRUD domain.

This sequence belongs to the pseudouridine synthase TruD family.

The catalysed reaction is uridine(13) in tRNA = pseudouridine(13) in tRNA. Functionally, responsible for synthesis of pseudouridine from uracil-13 in transfer RNAs. This is tRNA pseudouridine synthase D from Aeromonas hydrophila subsp. hydrophila (strain ATCC 7966 / DSM 30187 / BCRC 13018 / CCUG 14551 / JCM 1027 / KCTC 2358 / NCIMB 9240 / NCTC 8049).